We begin with the raw amino-acid sequence, 570 residues long: NADPH oxidase 2 (570 aa).

The Cytoplasmic segment spans residues glycine 2–glycine 9. Residues leucine 10 to glycine 36 form a helical membrane-spanning segment. Topologically, residues proline 37–leucine 46 are extracellular. N-linked (GlcNAc...) asparagine glycosylation occurs at asparagine 40. Residues glycine 47–cysteine 72 form a helical membrane-spanning segment. Positions arginine 54–valine 286 constitute a Ferric oxidoreductase domain. The Cytoplasmic segment spans residues arginine 73–aspartate 95. Residues arginine 96–arginine 130 traverse the membrane as a helical segment. Heme b-binding residues include histidine 101 and histidine 115. At valine 131 to proline 163 the chain is on the extracellular side. Glycyl lysine isopeptide (Lys-Gly) (interchain with G-Cter in ubiquitin) cross-links involve residues lysine 159 and lysine 161. Residues glutamate 164–threonine 194 traverse the membrane as a helical segment. At lysine 195–glutamate 203 the chain is on the cytoplasmic side. Positions 199 and 200 each coordinate FAD. The helical transmembrane segment at valine 204–histidine 222 threads the bilayer. Heme b is bound by residues tryptophan 206, histidine 209, histidine 222, arginine 226, and isoleucine 227. The Extracellular portion of the chain corresponds to glycine 223 to proline 267. A Glycyl lysine isopeptide (Lys-Gly) (interchain with G-Cter in ubiquitin) cross-link involves residue lysine 255. Residues methionine 268, tyrosine 280, and arginine 287 each coordinate heme b. A helical transmembrane segment spans residues methionine 268–leucine 285. Topologically, residues valine 286–phenylalanine 570 are cytoplasmic. The FAD-binding FR-type domain maps to arginine 287–aspartate 397. Glycyl lysine isopeptide (Lys-Gly) (interchain with G-Cter in ubiquitin) cross-links involve residues lysine 294, lysine 299, lysine 306, lysine 328, and lysine 334. Residues tryptophan 337, histidine 338, proline 339, threonine 341, histidine 354, arginine 356, tryptophan 361, and threonine 362 each contribute to the FAD site. Residue lysine 381 forms a Glycyl lysine isopeptide (Lys-Gly) (interchain with G-Cter in ubiquitin) linkage. Residues isoleucine 411, arginine 446, and threonine 481 each coordinate NADPH. Lysine 506 is covalently cross-linked (Glycyl lysine isopeptide (Lys-Gly) (interchain with G-Cter in ubiquitin)). Arginine 513 serves as a coordination point for NADPH. Lysine 567 participates in a covalent cross-link: Glycyl lysine isopeptide (Lys-Gly) (interchain with G-Cter in ubiquitin).

As to quaternary structure, component of the phagocyte NADPH oxidase core complex/cytochrome b558 complex, composed of CYBB (heavy chain (beta)) and CYBA (light chain (alpha)). Component of the phagocyte NADPH oxidase complex composed of an obligatory core heterodimer formed by the membrane proteins CYBA and CYBB and the cytosolic regulatory subunits NCF1/p47-phox, NCF2/p67-phox, NCF4/p40-phox and the small GTPase RAC1 or RAC2. Interacts with NCF1 (phosphorylated form). Interacts with NCF2; the interaction is enhanced in the presence of GBP7. Interacts with RAC2. Interacts with RAC1. Interacts with calprotectin (S100A8/9). Interacts with NRROS; the interaction is direct and impairs formation of a stable NADPH oxidase complex. Interacts with CYBC1; CYBC1 may act as a chaperone stabilizing Cytochrome b-245 heterodimer. The CYBA:CYBB complex interacts with GBP7. Requires FAD as cofactor. In terms of processing, glycosylated. Post-translationally, phosphorylated on Ser and Thr residues by PKC during neutrophils activation. Phosphorylation enhances the NADPH oxidase activity and stimulates its interaction with RAC2, NCF2/p67-phox, and NCF1/p47-phox. Undergoes 'Lys-48'-linked polyubiquitination, likely by RNF145, triggering endoplasmic reticulum-associated degradation.

It is found in the cell membrane. The catalysed reaction is NADPH + 2 O2 = 2 superoxide + NADP(+) + H(+). In terms of biological role, catalytic subunit of the phagocyte NADPH oxidase complex that mediates the transfer of electrons from cytosolic NADPH to O2 to produce the superoxide anion (O2(-)). In the activated complex, electrons are first transferred from NADPH to flavin adenine dinucleotide (FAD) and subsequently transferred via two heme molecules to molecular oxygen, producing superoxide through an outer-sphere reaction. Activation of the NADPH oxidase complex is initiated by the assembly of cytosolic subunits of the NADPH oxidase complex with the core NADPH oxidase complex to form a complex at the plasma membrane or phagosomal membrane. This activation process is initiated by phosphorylation dependent binding of the cytosolic NCF1/p47-phox subunit to the C-terminus of CYBA/p22-phox. NADPH oxidase complex assembly is impaired through interaction with NRROS. The polypeptide is NADPH oxidase 2 (Mus musculus (Mouse)).